A 446-amino-acid polypeptide reads, in one-letter code: Dimethylsulfoniopropionate lyase DddP (446 aa).

Residues 1 to 13 (MNQHYSETRKIDP) are compositionally biased toward basic and acidic residues. Residues 1–30 (MNQHYSETRKIDPSRGATLGDNTPNDNNRI) form a disordered region. A divalent metal cation contacts are provided by D295, D297, D307, H371, E406, and E421.

Belongs to the peptidase M24B family. In terms of assembly, homodimer. A divalent metal cation is required as a cofactor.

The enzyme catalyses S,S-dimethyl-beta-propiothetin = acrylate + dimethyl sulfide + H(+). In terms of biological role, able to cleave dimethylsulfoniopropionate (DMSP), releasing dimethyl sulfide (DMS). DMS is the principal form by which sulfur is transported from oceans to the atmosphere. The real activity of the protein is however subject to debate and it is unclear whether it constitutes a real dimethylsulfoniopropionate lyase in vivo: the low activity with DMSP as substrate suggests that DMSP is not its native substrate. The sequence is that of Dimethylsulfoniopropionate lyase DddP from Roseovarius nubinhibens (strain ATCC BAA-591 / DSM 15170 / ISM).